The following is a 361-amino-acid chain: N-methyltransferase benX (361 aa).

The protein belongs to the methyltransferase superfamily.

The protein operates within secondary metabolite biosynthesis. Its function is as follows. N-methyltransferase; part of the gene cluster that mediates the biosynthesis of benzomalvin A and D. The pathway begins with the loading of amino acid precursors onto the A domains of the non ribosomal peptide synthetases benY and benZ. BenY and the A1 domain of benZ are loaded with anthranilate (Anth), while the A2 domain of benZ is loaded with phenylalanine (Phe). N-methylation of Phe by the methyltransferase benX may happen before loading of Phe onto benZ, after loading of Phe, or after dipeptide formation. Condensation of Anth with the secondary amine of NmPhe or Phe is catalyzed by the C1 domain of benZ, forming a dipeptide intermediate. This is followed by in trans condensation of the Anth-NmPhe dipeptide with Anth bound to the T domain of benY by the C2 domain of benZ to form the linear tripeptide Anth-NmPhe-Anth. Cyclization and release of the tripeptide is then catalyzed by the C-terminal C domain of benY and the resulting 11-member macrocyclic intermediate is expected to spontaneously collapse to form the benzodiazepine core. Benzomalvin A is in conformational equilibrium with its atropisomer, benzomalvin D. This Aspergillus terreus protein is N-methyltransferase benX.